A 144-amino-acid chain; its full sequence is D-aminoacyl-tRNA deacylase (144 aa).

The short motif at 136–137 (GP) is the Gly-cisPro motif, important for rejection of L-amino acids element.

This sequence belongs to the DTD family. Homodimer.

Its subcellular location is the cytoplasm. It carries out the reaction glycyl-tRNA(Ala) + H2O = tRNA(Ala) + glycine + H(+). It catalyses the reaction a D-aminoacyl-tRNA + H2O = a tRNA + a D-alpha-amino acid + H(+). An aminoacyl-tRNA editing enzyme that deacylates mischarged D-aminoacyl-tRNAs. Also deacylates mischarged glycyl-tRNA(Ala), protecting cells against glycine mischarging by AlaRS. Acts via tRNA-based rather than protein-based catalysis; rejects L-amino acids rather than detecting D-amino acids in the active site. By recycling D-aminoacyl-tRNA to D-amino acids and free tRNA molecules, this enzyme counteracts the toxicity associated with the formation of D-aminoacyl-tRNA entities in vivo and helps enforce protein L-homochirality. The chain is D-aminoacyl-tRNA deacylase from Glaesserella parasuis serovar 5 (strain SH0165) (Haemophilus parasuis).